The following is a 589-amino-acid chain: Mediator of RNA polymerase II transcription subunit 26 (589 aa).

The 78-residue stretch at 10–87 (QMRDRLLQAI…RNWQKLIEPG (78 aa)) folds into the TFIIS N-terminal domain. 3 disordered regions span residues 83–233 (LIEP…TKLP), 247–320 (ARVD…DGPS), and 363–441 (LETK…PIPE). Residues 190 to 213 (LLEKDDEVPSDRIRLEHLDNDRHN) show a composition bias toward basic and acidic residues. Positions 259–268 (SPRYSSSPRS) are enriched in low complexity. Residues 276–297 (KRSTTYAPKGTLSSPSLNSAQV) show a composition bias toward polar residues. 2 stretches are compositionally biased toward basic and acidic residues: residues 398-412 (SEDRTKPRLKERRLT) and 424-435 (TPKESHQEEECH).

Belongs to the Mediator complex subunit 26 family. In terms of assembly, component of the Mediator complex.

It is found in the nucleus. Its function is as follows. Component of the Mediator complex, a coactivator involved in the regulated transcription of nearly all RNA polymerase II-dependent genes. Mediator functions as a bridge to convey information from gene-specific regulatory proteins to the basal RNA polymerase II transcription machinery. Mediator is recruited to promoters by direct interactions with regulatory proteins and serves as a scaffold for the assembly of a functional preinitiation complex with RNA polymerase II and the general transcription factors. This chain is Mediator of RNA polymerase II transcription subunit 26 (med26), found in Danio rerio (Zebrafish).